The primary structure comprises 1362 residues: Mediator of RNA polymerase II transcription subunit 12 (1362 aa).

Residues 31–51 (LRPPDDIHPLVDPARIGDSVY) form a disordered region.

The protein belongs to the Mediator complex subunit 12 family. In terms of assembly, component of the SRB8-11 complex, which itself associates with the Mediator complex.

Its subcellular location is the nucleus. Functionally, component of the SRB8-11 complex. The SRB8-11 complex is a regulatory module of the Mediator complex which is itself involved in regulation of basal and activated RNA polymerase II-dependent transcription. The SRB8-11 complex may be involved in the transcriptional repression of a subset of genes regulated by Mediator. It may inhibit the association of the Mediator complex with RNA polymerase II to form the holoenzyme complex. This chain is Mediator of RNA polymerase II transcription subunit 12 (SRB8), found in Yarrowia lipolytica (strain CLIB 122 / E 150) (Yeast).